A 622-amino-acid chain; its full sequence is Prothrombin (622 aa).

The signal sequence occupies residues 1–24 (MAHVRGLQLPGCLALAALCSLVHS). Residues 25–43 (QHVFLAPQQARSLLQRVRR) constitute a propeptide that is removed on maturation. Residues 44 to 89 (ANTFLEEVRKGNLERECVEETCSYEEAFEALESSTATDVFWAKYTA) form the Gla domain. 10 positions are modified to 4-carboxyglutamate: E49, E50, E57, E59, E62, E63, E68, E69, E72, and E75. An intrachain disulfide couples C60 to C65. 11 disulfides stabilise this stretch: C90-C103, C108-C186, C129-C169, C157-C181, C213-C291, C234-C274, C262-C286, C336-C482, C391-C407, C536-C550, and C564-C594. Kringle domains follow at residues 108–186 (CAEG…IPVC) and 213–291 (CVPD…LNYC). N-linked (GlcNAc...) (complex) asparagine glycosylation is found at N121 and N143. In terms of domain architecture, Peptidase S1 spans 364-618 (IVEGSDAEIG…LKKWIQKVID (255 aa)). The active-site Charge relay system is H406. Residue N416 is glycosylated (N-linked (GlcNAc...) (complex) asparagine). The Charge relay system role is filled by D462. The high affinity receptor-binding region which is also known as the TP508 peptide stretch occupies residues 551–573 (AGYKPDEGKRGDACEGDSGGPFV). Residue S568 is the Charge relay system of the active site.

It belongs to the peptidase S1 family. Heterodimer (named alpha-thrombin) of a light and a heavy chain; disulfide-linked. Forms a heterodimer with SERPINA5. In plasma, interacts (via N-terminus) with alpha-1-microglobulin with molar ratio 1:2 and 1:1; this interaction does not prevent the activation of prothrombin to thrombin. Interacts (thrombin) with iripin-8, a serine protease inhibitor from Ixodes ricinus saliva. Interacts (thrombin) with iripin-3, a serine protease inhibitor from Ixodes ricinus saliva. Interacts (thrombin) with Anopheles albimanus salivary thrombin inhibitor anophelin; the interaction results in thrombin inhibition. Interacts (thrombin) with Anopheles gambiae salivary thrombin inhibitor anophelin; the interaction results in thrombin inhibition. Interacts (thrombin) with Amblyomma variegatum variegin; the interaction results in thrombin inhibition. Interacts (thrombin) with Xenopsylla cheopis salivary thrombin inhibitor XC-42. Interacts (thrombin) with Xenopsylla cheopis salivary thrombin inhibitor XC-43. The gamma-carboxyglutamyl residues, which bind calcium ions, result from the carboxylation of glutamyl residues by a microsomal enzyme, the vitamin K-dependent carboxylase. The modified residues are necessary for the calcium-dependent interaction with a negatively charged phospholipid surface, which is essential for the conversion of prothrombin to thrombin. Post-translationally, N-glycosylated. N-glycan heterogeneity at Asn-121: Hex3HexNAc3 (minor), Hex4HexNAc3 (minor) and Hex5HexNAc4 (major). At Asn-143: Hex4HexNAc3 (minor) and Hex5HexNAc4 (major). In terms of processing, in the penultimate step of the coagulation cascade, prothrombin is converted to thrombin by the prothrombinase complex composed of factor Xa (F10), cofactor Va (F5), and phospholipids. This activation requires factor Xa-catalyzed sequential cleavage at 2 sites, Arg-314 and Arg-363, along 2 possible pathways. In the first pathway, the first cleavage occurs at Arg-314, leading to the formation of the inactive intermediate prethrombin-2. This pathway preferentially occurs on platelets and in the absence of cofactor Va. In the second pathway, the first cleavage occurs at Arg-363, which separates protease domain into 2 chains that remain connected through a disulfide bond and generates the active intermediate meizothrombin. The presence of cofactor Va directs activation along the meizothrombin pathway and greatly accelerates the rate of cleavage at Arg-363, but has a smaller effect on the cleavage of meizothrombin at Arg-314. Meizothrombin accumulates as an intermediate when prothrombinase is assembled on the membrane of red blood cells. As to expression, expressed by the liver and secreted in plasma.

It localises to the secreted. The protein localises to the extracellular space. It carries out the reaction Selective cleavage of Arg-|-Gly bonds in fibrinogen to form fibrin and release fibrinopeptides A and B.. Activity is promoted in the presence of negatively charged surfaces, such as polyphosphate and dextran sulfate. Inhibited by SERPINA5. Its function is as follows. Thrombin, which cleaves bonds after Arg and Lys, converts fibrinogen to fibrin and activates factors V, VII, VIII, XIII, and, in complex with thrombomodulin, protein C. Functions in blood homeostasis, inflammation and wound healing. Activates coagulation factor XI (F11); activation is promoted by the contact with negatively charged surfaces. Triggers the production of pro-inflammatory cytokines, such as MCP-1/CCL2 and IL8/CXCL8, in endothelial cells. This is Prothrombin (F2) from Homo sapiens (Human).